The chain runs to 274 residues: Large ribosomal subunit protein uL2 (274 aa).

A disordered region spans residues 223–274; sequence VAMNPVDHPHGGGEGKTSGGRHPVSPWGVPTKGYKTRSNKRTDKFIVRRRAK.

This sequence belongs to the universal ribosomal protein uL2 family. In terms of assembly, part of the 50S ribosomal subunit. Forms a bridge to the 30S subunit in the 70S ribosome.

One of the primary rRNA binding proteins. Required for association of the 30S and 50S subunits to form the 70S ribosome, for tRNA binding and peptide bond formation. It has been suggested to have peptidyltransferase activity; this is somewhat controversial. Makes several contacts with the 16S rRNA in the 70S ribosome. The chain is Large ribosomal subunit protein uL2 from Colwellia psychrerythraea (strain 34H / ATCC BAA-681) (Vibrio psychroerythus).